A 317-amino-acid chain; its full sequence is Beta-ketoacyl-[acyl-carrier-protein] synthase III (317 aa).

Active-site residues include Cys112 and His244. The interval 245–249 is ACP-binding; sequence QANLR. The active site involves Asn274.

The protein belongs to the thiolase-like superfamily. FabH family. In terms of assembly, homodimer.

It localises to the cytoplasm. It carries out the reaction malonyl-[ACP] + acetyl-CoA + H(+) = 3-oxobutanoyl-[ACP] + CO2 + CoA. It participates in lipid metabolism; fatty acid biosynthesis. Functionally, catalyzes the condensation reaction of fatty acid synthesis by the addition to an acyl acceptor of two carbons from malonyl-ACP. Catalyzes the first condensation reaction which initiates fatty acid synthesis and may therefore play a role in governing the total rate of fatty acid production. Possesses both acetoacetyl-ACP synthase and acetyl transacylase activities. Its substrate specificity determines the biosynthesis of branched-chain and/or straight-chain of fatty acids. The protein is Beta-ketoacyl-[acyl-carrier-protein] synthase III of Pectobacterium atrosepticum (strain SCRI 1043 / ATCC BAA-672) (Erwinia carotovora subsp. atroseptica).